The chain runs to 150 residues: Endoribonuclease YbeY (150 aa).

Positions 113, 117, and 123 each coordinate Zn(2+).

Belongs to the endoribonuclease YbeY family. Requires Zn(2+) as cofactor.

Its subcellular location is the cytoplasm. Its function is as follows. Single strand-specific metallo-endoribonuclease involved in late-stage 70S ribosome quality control and in maturation of the 3' terminus of the 16S rRNA. This is Endoribonuclease YbeY from Wolbachia sp. subsp. Drosophila simulans (strain wRi).